The primary structure comprises 317 residues: Transaldolase (317 aa).

Lysine 126 (schiff-base intermediate with substrate) is an active-site residue.

The protein belongs to the transaldolase family. Type 1 subfamily. As to quaternary structure, homodimer.

It is found in the cytoplasm. It catalyses the reaction D-sedoheptulose 7-phosphate + D-glyceraldehyde 3-phosphate = D-erythrose 4-phosphate + beta-D-fructose 6-phosphate. Its pathway is carbohydrate degradation; pentose phosphate pathway; D-glyceraldehyde 3-phosphate and beta-D-fructose 6-phosphate from D-ribose 5-phosphate and D-xylulose 5-phosphate (non-oxidative stage): step 2/3. Functionally, transaldolase is important for the balance of metabolites in the pentose-phosphate pathway. This is Transaldolase from Burkholderia ambifaria (strain ATCC BAA-244 / DSM 16087 / CCUG 44356 / LMG 19182 / AMMD) (Burkholderia cepacia (strain AMMD)).